We begin with the raw amino-acid sequence, 123 residues long: Small ribosomal subunit protein uS13c (123 aa).

The disordered stretch occupies residues 90 to 123 (GKRHRNSLPVRGQRTRTNARSRRGAKKTVTGKKK). Over residues 102 to 123 (QRTRTNARSRRGAKKTVTGKKK) the composition is skewed to basic residues.

Belongs to the universal ribosomal protein uS13 family. Part of the 30S ribosomal subunit.

It is found in the plastid. It localises to the chloroplast. Functionally, located at the top of the head of the 30S subunit, it contacts several helices of the 16S rRNA. The chain is Small ribosomal subunit protein uS13c from Thalassiosira pseudonana (Marine diatom).